Consider the following 364-residue polypeptide: Heat-inducible transcription repressor HrcA (364 aa).

The protein belongs to the HrcA family.

Functionally, negative regulator of class I heat shock genes (grpE-dnaK-dnaJ and groELS operons). Prevents heat-shock induction of these operons. The polypeptide is Heat-inducible transcription repressor HrcA (Cyanothece sp. (strain PCC 7425 / ATCC 29141)).